The sequence spans 407 residues: Aspartate aminotransferase, cytoplasmic (407 aa).

G39, W136, and N189 together coordinate L-aspartate. K253 bears the N6-(pyridoxal phosphate)lysine mark. Residue R381 coordinates L-aspartate.

It belongs to the class-I pyridoxal-phosphate-dependent aminotransferase family. In terms of assembly, homodimer. Requires pyridoxal 5'-phosphate as cofactor.

The protein resides in the cytoplasm. It carries out the reaction L-aspartate + 2-oxoglutarate = oxaloacetate + L-glutamate. In terms of biological role, important for the metabolism of amino acids and Krebs-cycle related organic acids. In plants, it is involved in nitrogen metabolism and in aspects of carbon and energy metabolism. This Oryza sativa subsp. japonica (Rice) protein is Aspartate aminotransferase, cytoplasmic.